The sequence spans 248 residues: Ribonuclease PH (248 aa).

Phosphate is bound by residues Arg86 and Gly124–Arg126.

This sequence belongs to the RNase PH family. As to quaternary structure, homohexameric ring arranged as a trimer of dimers.

It carries out the reaction tRNA(n+1) + phosphate = tRNA(n) + a ribonucleoside 5'-diphosphate. Functionally, phosphorolytic 3'-5' exoribonuclease that plays an important role in tRNA 3'-end maturation. Removes nucleotide residues following the 3'-CCA terminus of tRNAs; can also add nucleotides to the ends of RNA molecules by using nucleoside diphosphates as substrates, but this may not be physiologically important. Probably plays a role in initiation of 16S rRNA degradation (leading to ribosome degradation) during starvation. The protein is Ribonuclease PH of Clostridium kluyveri (strain NBRC 12016).